A 451-amino-acid chain; its full sequence is Probable beta-1,4-xylosyltransferase GT43E (451 aa).

At 1–88 the chain is on the cytoplasmic side; it reads MVSSRRNTGG…SKSRGLSCKR (88 aa). The chain crosses the membrane as a helical; Signal-anchor for type II membrane protein span at residues 89–109; that stretch reads LAFHLFVCFMVGIFIGFMPFF. Topologically, residues 110–451 are lumenal; sequence SVDVSQKIVS…KNLDAVIPVT (342 aa). Residues Asn260 and Asn366 are each glycosylated (N-linked (GlcNAc...) asparagine).

Belongs to the glycosyltransferase 43 family.

The protein localises to the golgi apparatus membrane. Functionally, probable beta-1,4-xylosyltransferase involved in xylan biosynthesis in cell walls. This Oryza sativa subsp. japonica (Rice) protein is Probable beta-1,4-xylosyltransferase GT43E.